Reading from the N-terminus, the 212-residue chain is Putative tyrosine-protein phosphatase OCA1 (212 aa).

Residues 1-27 (MSNKDTSILKGNVDHEEADSNPKLRKI) are disordered. Residues 12 to 22 (NVDHEEADSNP) are compositionally biased toward basic and acidic residues. The 169-residue stretch at 40 to 208 (NFCPVERQLY…SVEIDPSKVP (169 aa)) folds into the Tyrosine-protein phosphatase domain. C146 serves as the catalytic Phosphocysteine intermediate.

It belongs to the protein-tyrosine phosphatase family.

It is found in the cytoplasm. It carries out the reaction O-phospho-L-tyrosyl-[protein] + H2O = L-tyrosyl-[protein] + phosphate. In terms of biological role, putative tyrosine-protein phosphatase required for protection against superoxide stress. The polypeptide is Putative tyrosine-protein phosphatase OCA1 (OCA1) (Scheffersomyces stipitis (strain ATCC 58785 / CBS 6054 / NBRC 10063 / NRRL Y-11545) (Yeast)).